We begin with the raw amino-acid sequence, 123 residues long: UPF0102 protein PSHAa2523 (123 aa).

This sequence belongs to the UPF0102 family.

The chain is UPF0102 protein PSHAa2523 from Pseudoalteromonas translucida (strain TAC 125).